The following is a 418-amino-acid chain: AP-3 complex subunit mu-1 (418 aa).

Residues 176-417 (NNEAYFDVVE…VTKAGKFQVR (242 aa)) enclose the MHD domain.

It belongs to the adaptor complexes medium subunit family. Adaptor protein complex 3 (AP-3) is a heterotetramer composed of two large adaptins (delta-type subunit AP3D1 and beta-type subunit AP3B1 or AP3B2), a medium adaptin (mu-type subunit AP3M1 or AP3M2) and a small adaptin (sigma-type subunit APS1 or AP3S2). Interacts with AGAP1. AP-3 associates with the BLOC-1 complex.

The protein resides in the golgi apparatus. It localises to the cytoplasmic vesicle membrane. Part of the AP-3 complex, an adaptor-related complex which is not clathrin-associated. The complex is associated with the Golgi region as well as more peripheral structures. It facilitates the budding of vesicles from the Golgi membrane and may be directly involved in trafficking to lysosomes. In concert with the BLOC-1 complex, AP-3 is required to target cargos into vesicles assembled at cell bodies for delivery into neurites and nerve terminals. In Mus musculus (Mouse), this protein is AP-3 complex subunit mu-1 (Ap3m1).